A 1329-amino-acid chain; its full sequence is Putative protein tag-53 (1329 aa).

Residues 65-92 (SCDKPCYNGVCLNKACVCSKGWYGSQCD) form the EGF-like 1 domain. 5 disulfide bridges follow: Cys-66/Cys-75, Cys-70/Cys-80, Cys-82/Cys-91, Cys-94/Cys-120, and Cys-144/Cys-166. A CUB domain is found at 94 to 203 (CFGRIRISDN…NGFNVSYESN (110 aa)). Residue Asn-103 is glycosylated (N-linked (GlcNAc...) asparagine). Residues Asn-197 and Asn-208 are each glycosylated (N-linked (GlcNAc...) asparagine). EGF-like domains follow at residues 204–232 (RCAY…LNCE) and 235–270 (VCQL…ETCQ). 6 cysteine pairs are disulfide-bonded: Cys-205–Cys-215, Cys-209–Cys-220, Cys-222–Cys-231, Cys-236–Cys-252, Cys-247–Cys-257, and Cys-259–Cys-269. 6 Kelch repeats span residues 302-353 (VVWS…KYKN), 355-408 (LYMF…VAGH), 416-463 (EMFV…AVEY), 471-518 (AILV…YLNG), 520-575 (MVVV…VIGQ), and 577-619 (LYAL…KCVF). 6 N-linked (GlcNAc...) asparagine glycosylation sites follow: Asn-324, Asn-395, Asn-447, Asn-481, Asn-529, and Asn-555. Asn-820 carries an N-linked (GlcNAc...) asparagine glycan. N-linked (GlcNAc...) asparagine; atypical glycosylation occurs at Asn-832. Asn-833 and Asn-934 each carry an N-linked (GlcNAc...) asparagine glycan. 8 disulfide bridges follow: Cys-945-Cys-953, Cys-947-Cys-968, Cys-971-Cys-980, Cys-983-Cys-997, Cys-1000-Cys-1009, Cys-1002-Cys-1016, Cys-1018-Cys-1028, and Cys-1031-Cys-1045. Laminin EGF-like domains lie at 945–999 (CQCN…VCSP) and 1000–1047 (CDCH…PCFY). Residues 952–998 (TCFTSVGSFPPVTIEKCQSCQNHTTGAHCERCAPGFYGDARNGGVCS) form the EGF-like 4 domain. The N-linked (GlcNAc...) asparagine glycan is linked to Asn-973. 3 N-linked (GlcNAc...) asparagine glycosylation sites follow: Asn-1066, Asn-1102, and Asn-1147. Residues 1176–1196 (VLFFVIFAACFIVLLVVAGLL) form a helical membrane-spanning segment. The Cytoplasmic portion of the chain corresponds to 1197-1329 (WMIKVRIEAY…TIRQRPNNND (133 aa)).

The protein resides in the membrane. This Caenorhabditis elegans protein is Putative protein tag-53 (tag-53).